A 428-amino-acid chain; its full sequence is Enolase (428 aa).

Q163 serves as a coordination point for (2R)-2-phosphoglycerate. Catalysis depends on E205, which acts as the Proton donor. The Mg(2+) site is built by D242, E285, and D312. 4 residues coordinate (2R)-2-phosphoglycerate: K337, R366, S367, and K388. K337 acts as the Proton acceptor in catalysis.

It belongs to the enolase family. Requires Mg(2+) as cofactor.

It is found in the cytoplasm. The protein localises to the secreted. It localises to the cell surface. It carries out the reaction (2R)-2-phosphoglycerate = phosphoenolpyruvate + H2O. It functions in the pathway carbohydrate degradation; glycolysis; pyruvate from D-glyceraldehyde 3-phosphate: step 4/5. Functionally, catalyzes the reversible conversion of 2-phosphoglycerate (2-PG) into phosphoenolpyruvate (PEP). It is essential for the degradation of carbohydrates via glycolysis. This Neisseria meningitidis serogroup C / serotype 2a (strain ATCC 700532 / DSM 15464 / FAM18) protein is Enolase.